The sequence spans 102 residues: NADH-quinone oxidoreductase subunit K (102 aa).

The next 3 membrane-spanning stretches (helical) occupy residues Met6–Val26, Ile30–Val50, and Val62–Leu82.

Belongs to the complex I subunit 4L family. In terms of assembly, NDH-1 is composed of 13 different subunits. Subunits NuoA, H, J, K, L, M, N constitute the membrane sector of the complex.

The protein resides in the cell inner membrane. The enzyme catalyses a quinone + NADH + 5 H(+)(in) = a quinol + NAD(+) + 4 H(+)(out). In terms of biological role, NDH-1 shuttles electrons from NADH, via FMN and iron-sulfur (Fe-S) centers, to quinones in the respiratory chain. The immediate electron acceptor for the enzyme in this species is believed to be ubiquinone. Couples the redox reaction to proton translocation (for every two electrons transferred, four hydrogen ions are translocated across the cytoplasmic membrane), and thus conserves the redox energy in a proton gradient. This is NADH-quinone oxidoreductase subunit K from Ectopseudomonas mendocina (strain ymp) (Pseudomonas mendocina).